Reading from the N-terminus, the 128-residue chain is Sirohydrochlorin cobaltochelatase (128 aa).

His9 functions as the Proton acceptor in the catalytic mechanism. His9 provides a ligand contact to Co(2+). Substrate contacts are provided by residues Lys43 and 68-73 (FATGTH). A Co(2+)-binding site is contributed by His73.

Belongs to the CbiX family. CbiXS subfamily. Homotetramer; dimer of dimers.

It carries out the reaction Co-sirohydrochlorin + 2 H(+) = sirohydrochlorin + Co(2+). Its pathway is cofactor biosynthesis; adenosylcobalamin biosynthesis; cob(II)yrinate a,c-diamide from sirohydrochlorin (anaerobic route): step 1/10. Its function is as follows. Catalyzes the insertion of Co(2+) into sirohydrochlorin as part of the anaerobic pathway to cobalamin biosynthesis. This is Sirohydrochlorin cobaltochelatase from Saccharolobus islandicus (strain Y.G.57.14 / Yellowstone #1) (Sulfolobus islandicus).